A 313-amino-acid chain; its full sequence is MSTKTIRIATRQSPLAMWQALYVQQKLQQCHPDLEVQLVPMVTQGDVILDTPLAKIGGKGLFVKELELALLEGRADIAVHSMKDVPISFPEGLGLVTICERDDPRDAFVSVKYHSLDELPTGSIVGTSSLRRQCQLRELRPDLIVRDLRGNVGTRLNKLDNGHYDAIILAVAGLKRLKLHERIRTPLTAEQSLPAVGQGAVGIECRLDDQQTQTLLAPLNHYDTEVCVLAERAMNTRLEGGCQVPIGSYAIWQDGKIWLRALVGAPDGSVIIRGERTALPKDACQAGVELAEELLERGAREILTQVYRGNPST.

The residue at position 242 (Cys242) is an S-(dipyrrolylmethanemethyl)cysteine.

The protein belongs to the HMBS family. In terms of assembly, monomer. Dipyrromethane is required as a cofactor.

It carries out the reaction 4 porphobilinogen + H2O = hydroxymethylbilane + 4 NH4(+). Its pathway is porphyrin-containing compound metabolism; protoporphyrin-IX biosynthesis; coproporphyrinogen-III from 5-aminolevulinate: step 2/4. Functionally, tetrapolymerization of the monopyrrole PBG into the hydroxymethylbilane pre-uroporphyrinogen in several discrete steps. The chain is Porphobilinogen deaminase from Photorhabdus laumondii subsp. laumondii (strain DSM 15139 / CIP 105565 / TT01) (Photorhabdus luminescens subsp. laumondii).